The primary structure comprises 199 residues: Peroxiredoxin-1 (199 aa).

The residue at position 2 (S2) is an N-acetylserine. In terms of domain architecture, Thioredoxin spans 6 to 165 (AKIGHRAPQF…TLRLVQAFQF (160 aa)). Residue K7 is modified to N6-acetyllysine; alternate. K7 participates in a covalent cross-link: Glycyl lysine isopeptide (Lys-Gly) (interchain with G-Cter in SUMO2); alternate. K16 and K27 each carry N6-acetyllysine. The residue at position 35 (K35) is an N6-acetyllysine; alternate. Residue K35 is modified to N6-succinyllysine; alternate. The active-site Cysteine sulfenic acid (-SOH) intermediate is C52. T90 bears the Phosphothreonine mark. A Glycyl lysine isopeptide (Lys-Gly) (interchain with G-Cter in SUMO2) cross-link involves residue K120. At K136 the chain carries N6-acetyllysine. The tract at residues 176–199 (GWKPGSDTIKPDVQKSKEYFSKQK) is disordered. Basic and acidic residues predominate over residues 184–199 (IKPDVQKSKEYFSKQK). Residue K185 forms a Glycyl lysine isopeptide (Lys-Gly) (interchain with G-Cter in SUMO1) linkage. K197 carries the post-translational modification N6-acetyllysine.

The protein belongs to the peroxiredoxin family. AhpC/Prx1 subfamily. As to quaternary structure, homodimer; disulfide-linked, upon oxidation. 5 homodimers assemble to form a ring-like decamer. Interacts with GDPD5; forms a mixed-disulfide with GDPD5. Interacts with SESN1 and SESN2. Interacts with FAM107A. Phosphorylated on Thr-90 during the M-phase, which leads to a decrease in enzymatic activity. In terms of processing, acetylation increases reducing activity and resistance to superoxidation. Deacetylated by HDAC6 which decreases reducing activity.

The protein localises to the cytoplasm. It carries out the reaction a hydroperoxide + [thioredoxin]-dithiol = an alcohol + [thioredoxin]-disulfide + H2O. Its function is as follows. Thiol-specific peroxidase that catalyzes the reduction of hydrogen peroxide and organic hydroperoxides to water and alcohols, respectively. Plays a role in cell protection against oxidative stress by detoxifying peroxides and as sensor of hydrogen peroxide-mediated signaling events. Might participate in the signaling cascades of growth factors and tumor necrosis factor-alpha by regulating the intracellular concentrations of H(2)O(2). Reduces an intramolecular disulfide bond in GDPD5 that gates the ability to GDPD5 to drive postmitotic motor neuron differentiation. The protein is Peroxiredoxin-1 (PRDX1) of Bos taurus (Bovine).